Reading from the N-terminus, the 332-residue chain is Flotillin-like protein FloA (332 aa).

A helical transmembrane segment spans residues 9–29; the sequence is FILIGGGIIFVVLFFHYVPFF.

This sequence belongs to the flotillin-like FloA family. In terms of assembly, homooligomerizes.

It localises to the cell membrane. The protein localises to the membrane raft. Functionally, found in functional membrane microdomains (FMM) that may be equivalent to eukaryotic membrane rafts. FMMs are highly dynamic and increase in number as cells age. Flotillins are thought to be important factors in membrane fluidity. The sequence is that of Flotillin-like protein FloA from Phocaeicola vulgatus (strain ATCC 8482 / DSM 1447 / JCM 5826 / CCUG 4940 / NBRC 14291 / NCTC 11154) (Bacteroides vulgatus).